Consider the following 321-residue polypeptide: Glyoxylate/hydroxypyruvate reductase B (321 aa).

Active-site residues include Arg237 and Glu266. The active-site Proton donor is the His285.

It belongs to the D-isomer specific 2-hydroxyacid dehydrogenase family. GhrB subfamily. In terms of assembly, homodimer.

It is found in the cytoplasm. The enzyme catalyses glycolate + NADP(+) = glyoxylate + NADPH + H(+). It catalyses the reaction (R)-glycerate + NAD(+) = 3-hydroxypyruvate + NADH + H(+). The catalysed reaction is (R)-glycerate + NADP(+) = 3-hydroxypyruvate + NADPH + H(+). Functionally, catalyzes the NADPH-dependent reduction of glyoxylate and hydroxypyruvate into glycolate and glycerate, respectively. The protein is Glyoxylate/hydroxypyruvate reductase B of Erwinia tasmaniensis (strain DSM 17950 / CFBP 7177 / CIP 109463 / NCPPB 4357 / Et1/99).